The following is a 137-amino-acid chain: Large ribosomal subunit protein uL16 (137 aa).

This sequence belongs to the universal ribosomal protein uL16 family. As to quaternary structure, part of the 50S ribosomal subunit.

Its function is as follows. Binds 23S rRNA and is also seen to make contacts with the A and possibly P site tRNAs. This is Large ribosomal subunit protein uL16 from Nitrobacter winogradskyi (strain ATCC 25391 / DSM 10237 / CIP 104748 / NCIMB 11846 / Nb-255).